A 533-amino-acid chain; its full sequence is Monogalactosyldiacylglycerol synthase 1, chloroplastic (533 aa).

A 1,2-diacyl-sn-glycero-3-phospho-(1'-sn-glycerol)-binding residues include H155 and P189. A UDP-binding site is contributed by H155. The required for binding to diacyl glycerol stretch occupies residues 192–215 (QLPRSYNFLVKHGTLWKMTYYGTS). UDP is bound by residues R324, F413, I414, 434–438 (GTIAE), and E456.

It belongs to the glycosyltransferase 28 family. Homodimer. Expressed in roots, stems, leaves, flowers, siliques and seeds.

The protein localises to the plastid. Its subcellular location is the chloroplast inner membrane. It catalyses the reaction a 1,2-diacyl-sn-glycerol + UDP-alpha-D-galactose = a 1,2-diacyl-3-O-(beta-D-galactosyl)-sn-glycerol + UDP + H(+). The enzyme catalyses 1,2-di-(9Z,12Z-octadecadienoyl)-sn-glycerol + UDP-alpha-D-galactose = 1,2-di-(9Z,12Z-octadecadienoyl)-3-beta-D-galactosyl-sn-glycerol + UDP + H(+). The catalysed reaction is 1-(9Z-octadecenoyl)-2-hexadecanoyl-sn-glycerol + UDP-alpha-D-galactose = 1-(9Z-octadecenoyl)-2-hexadecanoyl-3-beta-D-galactosyl-sn-glycerol + UDP + H(+). It carries out the reaction 1,2-di-(9Z-octadecenoyl)-sn-glycerol + UDP-alpha-D-galactose = 1,2-di-(9Z-octadecenoyl)-3-beta-D-galactosyl-sn-glycerol + UDP + H(+). With respect to regulation, activated by phosphatidate (PA) and phosphatidylglycerol (PG). Inhibited by galvestine-1. In terms of biological role, involved in the synthesis of the major structural component of photosynthetic membranes. Required for proper thylakoid membrane biogenesis. Does not discriminate between prokaryotic (18:1/16:0) or eukaryotic (18:2/18:2) 1,2-diacylglycerol species, but operates with some preference for the prokaryotic one. Is responsible for most galactolipid synthesis in chloroplasts. Required for the formation of thylakoid membranes and functional photosynthetic electron transport during cotyledons greening in young seedlings. May link galactolipid synthesis with the coordinated transcriptional regulation of chloroplasts and other organelles during cotyledon greening. The sequence is that of Monogalactosyldiacylglycerol synthase 1, chloroplastic from Arabidopsis thaliana (Mouse-ear cress).